Here is an 88-residue protein sequence, read N- to C-terminus: Small ribosomal subunit protein uS17 (88 aa).

The protein belongs to the universal ribosomal protein uS17 family. Part of the 30S ribosomal subunit.

One of the primary rRNA binding proteins, it binds specifically to the 5'-end of 16S ribosomal RNA. In Mycoplasmopsis agalactiae (strain NCTC 10123 / CIP 59.7 / PG2) (Mycoplasma agalactiae), this protein is Small ribosomal subunit protein uS17.